Consider the following 165-residue polypeptide: MRIDPSTLNLKEKVVHINRVAKVVKGGRNFRFSVLVVVGDEAGHVGVGTGKSIEIPEAIRKAIEDAKKNIVEVKTVGTTVPHDIIGKFGKGEVLIMTAKEGTGVIAGGPVRAVLELAGLKDVRAKSKGSNNPTNMVNATIDGLARLRTVEDIAKLRGKTVEEILG.

One can recognise an S5 DRBM domain in the interval 10–73; that stretch reads LKEKVVHINR…EDAKKNIVEV (64 aa).

It belongs to the universal ribosomal protein uS5 family. In terms of assembly, part of the 30S ribosomal subunit. Contacts proteins S4 and S8.

Its function is as follows. With S4 and S12 plays an important role in translational accuracy. In terms of biological role, located at the back of the 30S subunit body where it stabilizes the conformation of the head with respect to the body. This chain is Small ribosomal subunit protein uS5, found in Clostridium botulinum (strain ATCC 19397 / Type A).